We begin with the raw amino-acid sequence, 157 residues long: WPP domain-containing protein 3 (157 aa).

The segment covering 1–20 has biased composition (polar residues); that stretch reads MAETADTINTTVSTPQPQLE. A disordered region spans residues 1 to 41; it reads MAETADTINTTVSTPQPQLESRSDETSCLQKHRSDATSEVT. Positions 32-41 are enriched in basic and acidic residues; sequence HRSDATSEVT. The tract at residues 37–138 is WPP; degenerate; the sequence is TSEVTKEEKS…IESAEVRFKA (102 aa).

In terms of tissue distribution, expressed in roots, stems and leaves.

The protein resides in the cytoplasm. It is found in the nucleus. Its function is as follows. Regulates the mitotic activity in roots. The polypeptide is WPP domain-containing protein 3 (WPP3) (Arabidopsis thaliana (Mouse-ear cress)).